We begin with the raw amino-acid sequence, 189 residues long: Probable nicotinate-nucleotide adenylyltransferase (189 aa).

This sequence belongs to the NadD family.

The catalysed reaction is nicotinate beta-D-ribonucleotide + ATP + H(+) = deamido-NAD(+) + diphosphate. It functions in the pathway cofactor biosynthesis; NAD(+) biosynthesis; deamido-NAD(+) from nicotinate D-ribonucleotide: step 1/1. Its function is as follows. Catalyzes the reversible adenylation of nicotinate mononucleotide (NaMN) to nicotinic acid adenine dinucleotide (NaAD). The protein is Probable nicotinate-nucleotide adenylyltransferase of Bacillus cereus (strain AH820).